The chain runs to 152 residues: Ribosome maturation factor RimP (152 aa).

This sequence belongs to the RimP family.

It is found in the cytoplasm. Functionally, required for maturation of 30S ribosomal subunits. In Burkholderia vietnamiensis (strain G4 / LMG 22486) (Burkholderia cepacia (strain R1808)), this protein is Ribosome maturation factor RimP.